The sequence spans 509 residues: Circadian clock oscillator protein KaiC (509 aa).

KaiC domains follow at residues Met-1–Phe-243 and Ile-257–Asn-509. ATP-binding residues include Gly-45, Thr-46, Gly-47, Lys-48, Thr-49, Ser-85, Lys-220, Leu-221, Arg-222, Thr-224, His-226, Asp-237, Thr-286, Gly-287, Thr-288, Gly-289, Lys-290, and Thr-291. Thr-49 is a binding site for Mg(2+). Residues Thr-291 and Glu-314 each coordinate Mg(2+). Residue Trp-327 participates in ATP binding. Ser-427 bears the Phosphoserine; by autocatalysis mark. The residue at position 428 (Thr-428) is a Phosphothreonine; by autocatalysis. ATP is bound by residues Arg-447, Lys-453, Met-454, Arg-455, Ser-457, His-459, and Lys-461.

This sequence belongs to the KaiC family. Homohexamer; hexamerization is dependent on ATP-binding. Component of the KaiBC complex. KaiC interacts with SasA, activating its autokinase function and leading to RpaA activation. Requires Mg(2+) as cofactor. In terms of processing, phosphorylated on serine and threonine residues by autocatalysis. Has a 4 step phosphorylation cycle; the autokinase acts first on Thr-428, then Ser-427. When Ser-427 is modified KaiC switches to an autophosphatase mode, acting first on phospho-Thr-428 then phospho-Ser-427.

It carries out the reaction L-seryl-[protein] + ATP = O-phospho-L-seryl-[protein] + ADP + H(+). The enzyme catalyses L-threonyl-[protein] + ATP = O-phospho-L-threonyl-[protein] + ADP + H(+). It catalyses the reaction ATP + H2O = ADP + phosphate + H(+). In terms of biological role, central component of the KaiBC oscillator complex, which constitutes the main circadian regulator in cyanobacteria. Its composition changes during the circadian cycle to control KaiC phosphorylation. Autophosphorylates and has a weak ATPase activity; ATPase activity defines the circadian period. This is Circadian clock oscillator protein KaiC from Prochlorococcus marinus subsp. pastoris (strain CCMP1986 / NIES-2087 / MED4).